Consider the following 493-residue polypeptide: Dipeptide and tripeptide permease B (493 aa).

Residues 1–27 are Cytoplasmic-facing; it reads MERSTPTGLLQQPKPFFMIFFVELWER. A helical membrane pass occupies residues 28-48; that stretch reads FGYYGVQGILAVFFVQQLGFS. The Periplasmic segment spans residues 49–52; the sequence is QEQA. Residues 53-73 form a helical membrane-spanning segment; sequence FVTFGAFAALVYGLISIGGYV. The Cytoplasmic portion of the chain corresponds to 74–82; that stretch reads GDHLLGTKR. A helical membrane pass occupies residues 83-103; sequence TMVLGAVVLAAGYFATGLSLY. At 104–106 the chain is on the periplasmic side; the sequence is QPN. The helical transmembrane segment at 107-127 threads the bilayer; it reads LIFFALGTIAVGNGLFKANPA. Residues 128-146 are Cytoplasmic-facing; that stretch reads SLLSKCYPPKDPRLDGAFT. A helical transmembrane segment spans residues 147–167; the sequence is LFYMSINIGSLLSLSLAPVIA. Over 168–169 the chain is Periplasmic; that stretch reads ER. A helical membrane pass occupies residues 170–190; sequence FGYTVTYYLCGIGLIFALLVY. The Cytoplasmic portion of the chain corresponds to 191–212; the sequence is FCCRHMVRHIGSEPDTKPLNWR. Transmembrane regions (helical) follow at residues 213–233 and 234–254; these read NLLL…WLMN and HVFI…FIFF. Residues 255 to 267 lie on the Cytoplasmic side of the membrane; sequence REASKQDRLGRNK. A helical membrane pass occupies residues 268-288; the sequence is MFVAFILMIEAIVFYVLYAQM. Residues 289–311 are Periplasmic-facing; that stretch reads PTSLNFFAINNVHHEILGFSINP. The helical transmembrane segment at 312–332 threads the bilayer; it reads VSFQALNPFWVVVASPILASI. Over 333–350 the chain is Cytoplasmic; it reads YTRLGSQNRDLSMPAKFT. A helical membrane pass occupies residues 351–371; the sequence is LGMFLCSLGFLTAAAAGMWFA. Topologically, residues 372–379 are periplasmic; the sequence is DAQGLTSP. The helical transmembrane segment at 380 to 400 threads the bilayer; the sequence is WFIVLVYLFQSLGELMISALG. Topologically, residues 401 to 424 are cytoplasmic; it reads LAMVAALVPQYLMGFILGMWFLTQ. Residues 425–445 form a helical membrane-spanning segment; it reads AASFLIGGYVATFTATPEGMT. Over 446–456 the chain is Periplasmic; that stretch reads DPLETLPIYTD. Residues 457–477 traverse the membrane as a helical segment; sequence VFGKIGMVTLVIALVMALLIP. Residues 478-493 lie on the Cytoplasmic side of the membrane; the sequence is WLNRMINSSAAEDAVA.

This sequence belongs to the major facilitator superfamily. Proton-dependent oligopeptide transporter (POT/PTR) (TC 2.A.17) family. DtpB subfamily.

The protein localises to the cell inner membrane. Proton-dependent permease that transports di- and tripeptides. The polypeptide is Dipeptide and tripeptide permease B (Yersinia enterocolitica serotype O:8 / biotype 1B (strain NCTC 13174 / 8081)).